The sequence spans 123 residues: Small ribosomal subunit protein uS12 (123 aa).

D89 is modified (3-methylthioaspartic acid).

The protein belongs to the universal ribosomal protein uS12 family. Part of the 30S ribosomal subunit. Contacts proteins S8 and S17. May interact with IF1 in the 30S initiation complex.

With S4 and S5 plays an important role in translational accuracy. In terms of biological role, interacts with and stabilizes bases of the 16S rRNA that are involved in tRNA selection in the A site and with the mRNA backbone. Located at the interface of the 30S and 50S subunits, it traverses the body of the 30S subunit contacting proteins on the other side and probably holding the rRNA structure together. The combined cluster of proteins S8, S12 and S17 appears to hold together the shoulder and platform of the 30S subunit. This Bifidobacterium animalis subsp. lactis (strain AD011) protein is Small ribosomal subunit protein uS12.